The sequence spans 347 residues: Phosphoribosylformylglycinamidine cyclo-ligase (347 aa).

It belongs to the AIR synthase family.

It localises to the cytoplasm. It catalyses the reaction 2-formamido-N(1)-(5-O-phospho-beta-D-ribosyl)acetamidine + ATP = 5-amino-1-(5-phospho-beta-D-ribosyl)imidazole + ADP + phosphate + H(+). Its pathway is purine metabolism; IMP biosynthesis via de novo pathway; 5-amino-1-(5-phospho-D-ribosyl)imidazole from N(2)-formyl-N(1)-(5-phospho-D-ribosyl)glycinamide: step 2/2. The polypeptide is Phosphoribosylformylglycinamidine cyclo-ligase (Bacillus cytotoxicus (strain DSM 22905 / CIP 110041 / 391-98 / NVH 391-98)).